The sequence spans 245 residues: Geranylgeranylglyceryl phosphate synthase (245 aa).

2 residues coordinate Mg(2+): Asp24 and Ser54. Sn-glycerol 1-phosphate is bound by residues 172-178, 203-204, and 225-226; these read YLEAGSG, GG, and GT.

This sequence belongs to the GGGP/HepGP synthase family. Group II subfamily. The cofactor is Mg(2+).

It is found in the cytoplasm. The enzyme catalyses sn-glycerol 1-phosphate + (2E,6E,10E)-geranylgeranyl diphosphate = sn-3-O-(geranylgeranyl)glycerol 1-phosphate + diphosphate. It functions in the pathway membrane lipid metabolism; glycerophospholipid metabolism. Prenyltransferase that catalyzes the transfer of the geranylgeranyl moiety of geranylgeranyl diphosphate (GGPP) to the C3 hydroxyl of sn-glycerol-1-phosphate (G1P). This reaction is the first ether-bond-formation step in the biosynthesis of archaeal membrane lipids. The sequence is that of Geranylgeranylglyceryl phosphate synthase from Staphylothermus marinus (strain ATCC 43588 / DSM 3639 / JCM 9404 / F1).